The primary structure comprises 398 residues: Cysteine protease ATG4A (398 aa).

The active-site Nucleophile is Cys77. Active-site residues include Asp279 and His281. The LIR motif lies at 393–396; that stretch reads FEIL.

It belongs to the peptidase C54 family. As to quaternary structure, interacts with ATG9A; the interaction is direct.

Its subcellular location is the cytoplasm. The catalysed reaction is [protein]-C-terminal L-amino acid-glycyl-phosphatidylethanolamide + H2O = [protein]-C-terminal L-amino acid-glycine + a 1,2-diacyl-sn-glycero-3-phosphoethanolamine. With respect to regulation, inhibited by N-ethylmaleimide. Redox-regulated during autophagy since reducing conditions activate ATG4A whereas an oxidizing environment such as the presence of H(2)O(2) inhibits its activity. Functionally, cysteine protease that plays a key role in autophagy by mediating both proteolytic activation and delipidation of ATG8 family proteins. The protease activity is required for proteolytic activation of ATG8 family proteins: cleaves the C-terminal amino acid of ATG8 proteins to reveal a C-terminal glycine. Exposure of the glycine at the C-terminus is essential for ATG8 proteins conjugation to phosphatidylethanolamine (PE) and insertion to membranes, which is necessary for autophagy. Preferred substrate is GABARAPL2 followed by MAP1LC3A and GABARAP. Protease activity is also required to counteract formation of high-molecular weight conjugates of ATG8 proteins (ATG8ylation): acts as a deubiquitinating-like enzyme that removes ATG8 conjugated to other proteins, such as ATG3. In addition to the protease activity, also mediates delipidation of ATG8 family proteins. Catalyzes delipidation of PE-conjugated forms of ATG8 proteins during macroautophagy. Compared to ATG4B, the major protein for proteolytic activation of ATG8 proteins, shows weaker ability to cleave the C-terminal amino acid of ATG8 proteins, while it displays stronger delipidation activity. Involved in phagophore growth during mitophagy independently of its protease activity and of ATG8 proteins: acts by regulating ATG9A trafficking to mitochondria and promoting phagophore-endoplasmic reticulum contacts during the lipid transfer phase of mitophagy. The protein is Cysteine protease ATG4A of Homo sapiens (Human).